Reading from the N-terminus, the 1061-residue chain is MPPPPHQKPENVLKRAHELIGVNQAPAALTLLHEHITSKRSRNVPIASLEPVMVLLVEQAVEQKKGKLAKDALYQYKNIAQNTNVGTIELVLKKFIELAAEKVTAAQQKADEVQSSIEATTGSSSVEDLEASETPESILLATVSGEQSKDRTDRAIVTPWLKFLWEAYRTVLDILRNNARLELLYQSTAMQAFDFCLKYARKTEFRRLCELLRNHVQTAAKYSAQMHAINLNDPDTLQRHLETRFQQLNVAVELELWQEAFRSVEDIHTLLSLSKRPAKNIMMANYYEKLTRIFLVGENYLFHAAAWSRYYNLLRQSAAMLATGQSKKSDSPPVSEADLQKAATFVVLSALSIPVISTSRSRGAMVDFDEARKNKNSRLTHLLGLSQAPTRSSLFRDVLSKALLRRASPQIRDLYNILEVDFHPLSICQKISPILAQVGADEEMQKYILPLQQVILTRLFQQLSQVYETVDLEFVQSLAQFPEPFQVTRGTIEKFIMNGNKKGDLAIRMDHATGVLSFDVDVFSSAKAVHAGSAAGSAENESGSVQRLQSTPSQIVRSQLTRLAEVLYTTCRYIDPSFNEARINARDAVLARAKAGAEKEHLEILSRKEVIQKRKDKASEIQAQKEKELARKKMLQEQALQQAEAQRLAEEQKIREQKRMAAEREEIKKKEVEGMLKDMKLDDVELEDLDNLDSNKIRMIKLQQLEREKNTIAEKLRVTGKRLDHLERAFRKEEAKKLPEDYAKQRERDIAAYELIKAQTLKEAELKHKEDVELKHRLTRLMPFYESFRADLHERRRDMFEKRRRDAERELEKQVTLRRKEYRERKLREKREREEKERALREAEERAEREKEEEKQRQEARKEELARLREEREKERERAKEAQARQQQREEEAMARRRAEKAAAAAVPIREREPFAATGSGPRLPLAGTKSTWREREAAKAAGGGAPSDSGPPPARAAPPPIERTDSRDRPAAGPPRLALAGNKPSWREREAAKNAAGGAPPPERSGPPPRVASGRGEPMDRAGSGRGGDRDARDNNGPAPEPLKASGGPGKYVPKFRREG.

Residues 114–126 (QSSIEATTGSSSV) are compositionally biased toward polar residues. Residues 114–133 (QSSIEATTGSSSVEDLEASE) are disordered. In terms of domain architecture, PCI spans 339 to 523 (LQKAATFVVL…GVLSFDVDVF (185 aa)). Coiled coils occupy residues 609 to 724 (EVIQ…KRLD) and 789 to 906 (RADL…AAAA). Over residues 828–901 (REKREREEKE…EAMARRRAEK (74 aa)) the composition is skewed to basic and acidic residues. Residues 828–1061 (REKREREEKE…KYVPKFRREG (234 aa)) form a disordered region. 2 stretches are compositionally biased toward pro residues: residues 950-962 (SGPP…PPPI) and 1000-1011 (APPPERSGPPPR).

Belongs to the eIF-3 subunit A family. As to quaternary structure, component of the eukaryotic translation initiation factor 3 (eIF-3) complex.

The protein resides in the cytoplasm. Functionally, RNA-binding component of the eukaryotic translation initiation factor 3 (eIF-3) complex, which is involved in protein synthesis of a specialized repertoire of mRNAs and, together with other initiation factors, stimulates binding of mRNA and methionyl-tRNAi to the 40S ribosome. The eIF-3 complex specifically targets and initiates translation of a subset of mRNAs involved in cell proliferation. In Chaetomium globosum (strain ATCC 6205 / CBS 148.51 / DSM 1962 / NBRC 6347 / NRRL 1970) (Soil fungus), this protein is Eukaryotic translation initiation factor 3 subunit A.